The chain runs to 643 residues: E3 ubiquitin-protein ligase AMFR (643 aa).

Positions 39–67 (PEAGPGEPDQLTASLQPEPPAPARPSAGG) are disordered. A run of 6 helical transmembrane segments spans residues 82–102 (LFVW…AKLI), 122–142 (FWNF…VQTV), 145–165 (VVMW…VQLC), 186–206 (VLSL…VCSI), 215–235 (TLAF…HVIL), and 276–296 (HIHM…VIFM). The RING-type zinc finger occupies 341-379 (CAICWDSMQAARKLPCGHLFHNSCLRSWLEQDTSCPTCR). The helical transmembrane segment at 429 to 449 (IASWLPSFSVEVMHTTNILGI) threads the bilayer. The 43-residue stretch at 456-498 (QLNAMAHQIQEMFPQVPYHLVLQDLQLTRSVEITTDNILEGRI) folds into the CUE domain. 2 disordered regions span residues 504–579 (TQRS…DERQ) and 596–624 (RFLN…PVTL). Phosphoserine is present on residues S516, S523, and S542. Over residues 548-563 (TLDFGEVEVEPSEVED) the composition is skewed to acidic residues. The span at 564-579 (FEARGSRFSKSADERQ) shows a compositional bias: basic and acidic residues. Residues 622–640 (VTLRRRMLAAAAERRLQKQ) are VCP/p97-interacting motif (VIM).

As to quaternary structure, interacts with RNF5. Also forms an ERAD complex containing VCP/p97, NGLY1; PSMC1; SAKS1 and RAD23B required for coupling retrotranslocation, ubiquitination and deglycosylation. Interacts with DERL1. Interacts (through a region distinct from the RING finger) with UBE2G2/UBC7. Component of the VCP/p97-AMFR/gp78 complex that enhances VCP/p97 binding to polyubiquitinated proteins for their degradation by the endoplasmic reticulum-associated degradation (ERAD) pathway. Interacts (via the VIM) with VCP/p97. Interacts (via its membrane domain) with INSIG1; the interaction initiates the sterol-mediated ubiquitination and degradation of HMGCR by the ERAD pathway. Interacts with AUP1, UBE2G2 and RNF139/TRC8; interaction with AUP1 facilitates interaction of AMFR with ubiquitin-conjugating enzyme UBE2G2 and ubiquitin ligase RNF139, leading to sterol-induced ubiquitination of HMGCR and its subsequent proteasomal degradation. Interacts with BAG6. Interacts with USP13 (via UBA 2 domain); the interaction is direct. Interacts with LMBR1L. Interacts with UBAC2 and CTNNB1. Interacts with C18orf32. In terms of assembly, (Microbial infection) Interacts with Staphylococcus aureus HIgB; this interaction regulates AMFR-mediated inflammation by promoting TAB3 ubiquitination to promote TAB3-TAK1 complex formation. Palmitoylation of the RING-type zing finger by ZDHHC6 promotes localization to the peripheral endoplasmic reticulum. In terms of tissue distribution, widely expressed.

Its subcellular location is the endoplasmic reticulum membrane. The catalysed reaction is [E2 ubiquitin-conjugating enzyme]-S-ubiquitinyl-L-cysteine + [acceptor protein]-L-cysteine = [E2 ubiquitin-conjugating enzyme]-L-cysteine + [acceptor protein]-S-ubiquitinyl-L-cysteine.. It participates in protein modification; protein ubiquitination. Its function is as follows. E3 ubiquitin-protein ligase that mediates the polyubiquitination of lysine and cysteine residues on target proteins, such as CD3D, CYP3A4, CFTR, INSIG1, SOAT2/ACAT2 and APOB for proteasomal degradation. Component of a VCP/p97-AMFR/gp78 complex that participates in the final step of endoplasmic reticulum-associated degradation (ERAD). The VCP/p97-AMFR/gp78 complex is involved in the sterol-accelerated ERAD degradation of HMGCR through binding to the HMGCR-INSIG1 complex at the ER membrane. In addition, interaction of AMFR with AUP1 facilitates interaction of AMFR with ubiquitin-conjugating enzyme UBE2G2 and ubiquitin ligase RNF139, leading to sterol-induced HMGCR ubiquitination. The ubiquitinated HMGCR is then released from the ER into the cytosol for subsequent destruction. In addition to ubiquitination on lysine residues, catalyzes ubiquitination on cysteine residues: together with INSIG1, mediates polyubiquitination of SOAT2/ACAT2 at 'Cys-277', leading to its degradation when the lipid levels are low. Catalyzes ubiquitination and subsequent degradation of INSIG1 when cells are depleted of sterols. Mediates polyubiquitination of INSIG2 at 'Cys-215' in some tissues, leading to its degradation. Also regulates ERAD through the ubiquitination of UBL4A a component of the BAG6/BAT3 complex. Also acts as a scaffold protein to assemble a complex that couples ubiquitination, retranslocation and deglycosylation. Mediates tumor invasion and metastasis as a receptor for the GPI/autocrine motility factor. In association with LMBR1L and UBAC2, negatively regulates the canonical Wnt signaling pathway in the lymphocytes by promoting the ubiquitin-mediated degradation of CTNNB1 and Wnt receptors FZD6 and LRP6. Regulates NF-kappa-B and MAPK signaling pathways by mediating 'Lys-27'-linked polyubiquitination of TAB3 and promoting subsequent TAK1/MAP3K7 activation. Required for proper lipid homeostasis. This is E3 ubiquitin-protein ligase AMFR from Homo sapiens (Human).